The sequence spans 241 residues: Triosephosphate isomerase (241 aa).

Position 9 to 11 (9 to 11 (NWK)) interacts with substrate. H96 (electrophile) is an active-site residue. E165 serves as the catalytic Proton acceptor. Substrate-binding positions include G171, S204, and 225 to 226 (GG).

The protein belongs to the triosephosphate isomerase family. Homodimer.

It is found in the cytoplasm. It catalyses the reaction D-glyceraldehyde 3-phosphate = dihydroxyacetone phosphate. It functions in the pathway carbohydrate biosynthesis; gluconeogenesis. Its pathway is carbohydrate degradation; glycolysis; D-glyceraldehyde 3-phosphate from glycerone phosphate: step 1/1. Functionally, involved in the gluconeogenesis. Catalyzes stereospecifically the conversion of dihydroxyacetone phosphate (DHAP) to D-glyceraldehyde-3-phosphate (G3P). This chain is Triosephosphate isomerase, found in Acaryochloris marina (strain MBIC 11017).